We begin with the raw amino-acid sequence, 189 residues long: Large ribosomal subunit protein bL9 (189 aa).

It belongs to the bacterial ribosomal protein bL9 family.

Functionally, binds to the 23S rRNA. The polypeptide is Large ribosomal subunit protein bL9 (Cereibacter sphaeroides (strain KD131 / KCTC 12085) (Rhodobacter sphaeroides)).